Here is a 158-residue protein sequence, read N- to C-terminus: GTP-dependent dephospho-CoA kinase (158 aa).

Residues D35, V36, D54, K56, E109, and D132 each coordinate GTP.

This sequence belongs to the GTP-dependent DPCK family.

It carries out the reaction 3'-dephospho-CoA + GTP = GDP + CoA + H(+). It participates in cofactor biosynthesis; coenzyme A biosynthesis. Functionally, catalyzes the GTP-dependent phosphorylation of the 3'-hydroxyl group of dephosphocoenzyme A to form coenzyme A (CoA). The sequence is that of GTP-dependent dephospho-CoA kinase from Methanococcus maripaludis (strain DSM 14266 / JCM 13030 / NBRC 101832 / S2 / LL).